The following is a 175-amino-acid chain: MSSVAKSTANKLDWTKIVSKLGLSGQTAAALTSFKKRNDEAKRILFELKQQPSNVDFAFYKSTLKNTAIVDKIQSDVSKFTPSKANLSKQLNLIESFEAKALENAKETESVVLAELTDLEKTLENIESARPFDQLTVDDVVKARPDVEEKVQDMVSKGRFEVPGYKEKFGDLVIM.

Ser2 is subject to N-acetylserine.

As to quaternary structure, F-type ATP synthases have 2 components, the catalytic core F(1) and the membrane-embedded component F(0), linked together by a central stalk and a peripheral stalk. The central stalk, also called rotor shaft, is often seen as part of F(1). The peripheral stalk is seen as part of F(0). F(0) contains the membrane channel next to the rotor. F-type ATP synthases form dimers but each monomer functions independently in ATP generation. The dimer consists of 18 different polypeptides: ATP1 (subunit alpha, part of F(1), 3 molecules per monomer), ATP2 (subunit beta, part of F(1), 3 molecules per monomer), ATP3 (subunit gamma, part of the central stalk), ATP4 (subunit b, part of the peripheral stalk), ATP5/OSCP (subunit 5/OSCP, part of the peripheral stalk), ATP6 (subunit a, part of the peripheral stalk), ATP7 (subunit d, part of the peripheral stalk), ATP8 (subunit 8, part of the peripheral stalk), OLI1 (subunit c, part of the rotor, 10 molecules per monomer), ATP14 (subunit h, part of the peripheral stalk), ATP15 (subunit epsilon, part of the central stalk), ATP16 (subunit delta, part of the central stalk), ATP17 (subunit f, part of the peripheral stalk), ATP18 (subunit i/j, part of the peripheral stalk). Dimer-specific subunits are ATP19 (subunit k, at interface between monomers), ATP20 (subunit g, at interface between monomers), TIM11 (subunit e, at interface between monomers). Also contains subunit L.

The protein resides in the mitochondrion inner membrane. In terms of biological role, mitochondrial membrane ATP synthase (F(1)F(0) ATP synthase or Complex V) produces ATP from ADP in the presence of a proton gradient across the membrane which is generated by electron transport complexes of the respiratory chain. F-type ATP synthases consist of two structural domains, F(1) - containing the extramembraneous catalytic core, and F(0) - containing the membrane proton channel, linked together by a central stalk and a peripheral stalk. During catalysis, ATP synthesis in the catalytic domain of F(1) is coupled via a rotary mechanism of the central stalk subunits to proton translocation. Part of the complex F(0) domain and the peripheral stalk, which acts as a stator to hold the catalytic alpha/ATP1(3)beta/ATP2(3) subcomplex and subunit a/ATP6 static relative to the rotary elements. This is ATP synthase subunit d, mitochondrial from Pichia angusta (Yeast).